A 133-amino-acid polypeptide reads, in one-letter code: Small ribosomal subunit protein uS8 (133 aa).

The protein belongs to the universal ribosomal protein uS8 family. As to quaternary structure, part of the 30S ribosomal subunit. Contacts proteins S5 and S12.

Functionally, one of the primary rRNA binding proteins, it binds directly to 16S rRNA central domain where it helps coordinate assembly of the platform of the 30S subunit. The sequence is that of Small ribosomal subunit protein uS8 from Gloeothece citriformis (strain PCC 7424) (Cyanothece sp. (strain PCC 7424)).